We begin with the raw amino-acid sequence, 877 residues long: Leucine--tRNA ligase (877 aa).

A 'HIGH' region motif is present at residues 50–60 (PYPSGKLHMGH). The 'KMSKS' region motif lies at 634-638 (KMSKS). Position 637 (lysine 637) interacts with ATP.

It belongs to the class-I aminoacyl-tRNA synthetase family.

It localises to the cytoplasm. It catalyses the reaction tRNA(Leu) + L-leucine + ATP = L-leucyl-tRNA(Leu) + AMP + diphosphate. This is Leucine--tRNA ligase from Hydrogenovibrio crunogenus (strain DSM 25203 / XCL-2) (Thiomicrospira crunogena).